A 223-amino-acid polypeptide reads, in one-letter code: Golgi SNAP receptor complex member 1-1 (223 aa).

Over 1 to 201 (MDVPSSWDAL…AAIKRKKSMD (201 aa)) the chain is Cytoplasmic. The stretch at 8–67 (DALRKQARKIEAQLDEQMHSYRRLVSTKALSKSDGNESDLEAGIDLLLRQLQQVNAQMQA) forms a coiled coil. A helical; Anchor for type IV membrane protein transmembrane segment spans residues 202-222 (TIILSLVAAVCTFLIFIYWIT). Residue Lys223 is a topological domain, vesicular.

Belongs to the GOSR1 family. Component of several multiprotein Golgi SNARE complexes.

It is found in the golgi apparatus membrane. Involved in transport from the ER to the Golgi apparatus as well as in intra-Golgi transport. It belongs to a super-family of proteins called t-SNAREs or soluble NSF (N-ethylmaleimide-sensitive factor) attachment protein receptor. The protein is Golgi SNAP receptor complex member 1-1 (GOS11) of Arabidopsis thaliana (Mouse-ear cress).